The sequence spans 649 residues: Phospholipase A1 PLIP1, chloroplastic (649 aa).

Residues M1–R67 constitute a chloroplast transit peptide. The short motif at G420 to G424 is the GXSXG element. The active-site Acyl-ester intermediate is S422. Catalysis depends on charge relay system residues D483 and H593.

Belongs to the AB hydrolase superfamily. Lipase family.

Its subcellular location is the plastid. The protein localises to the chloroplast thylakoid membrane. It carries out the reaction a 1,2-diacyl-sn-glycero-3-phosphocholine + H2O = a 2-acyl-sn-glycero-3-phosphocholine + a fatty acid + H(+). The catalysed reaction is a 1,2-diacyl-3-O-(beta-D-galactosyl)-sn-glycerol + 2 H2O = 3-beta-D-galactosyl-sn-glycerol + 2 a fatty acid + 2 H(+). Its function is as follows. Sn-1-specific phospholipase A1 involved in seed oil biosynthesis. Hydrolyzes polyunsaturated acyl groups from a unique chloroplast-specific phosphatidylglycerol (PG) that contains 16:1 delta 3-trans as its second acyl group. The polyunsaturated acyl groups released by PLIP1 are exported from the chloroplast, reincorporated into phosphatidylcholine (PC), and ultimately enter seed triacylglycerol (TAG). In vitro, possesses broad substrate specificity. Can hydrolyze the galactolipid monogalactosyldiacylglycerol (MGDG), and the phoshpolipids phosphatidylcholine (PC), phosphatidylethanolamine (PE), phosphatidic acid (PA), phosphatidylserine (PS) phosphatidylglycerol (PG) and phosphatidylinositol (PI). The polypeptide is Phospholipase A1 PLIP1, chloroplastic (Arabidopsis thaliana (Mouse-ear cress)).